We begin with the raw amino-acid sequence, 247 residues long: Protein NipSnap homolog 3B (247 aa).

An N6-succinyllysine mark is found at K45, K48, K57, and K166.

It belongs to the NipSnap family.

The protein resides in the cytoplasm. The protein localises to the cytosol. The sequence is that of Protein NipSnap homolog 3B (Nipsnap3b) from Mus musculus (Mouse).